The primary structure comprises 81 residues: Adenoregulin-related peptide (81 aa).

The first 22 residues, 1-22 (MAFLKKSLLLVLFLGLVSLSIC), serve as a signal peptide directing secretion. Residues 23–43 (EEEKRENEDEEEQEDDEQSEM) constitute a propeptide that is removed on maturation. The interval 24–46 (EEKRENEDEEEQEDDEQSEMKRG) is disordered. A compositionally biased stretch (acidic residues) spans 30-40 (EDEEEQEDDEQ). Isoleucine 78 bears the Isoleucine amide mark. Positions 79 to 81 (GEQ) are excised as a propeptide.

Expressed by the skin glands.

It is found in the secreted. Its function is as follows. Has antibacterial activity against Gram-positive bacterium M.luteus NCT C2665 and against Gram-negative bacterium E.coli K12D31. In Agalychnis callidryas (Red-eyed tree frog), this protein is Adenoregulin-related peptide.